Reading from the N-terminus, the 142-residue chain is Large ribosomal subunit protein uL13 (142 aa).

This sequence belongs to the universal ribosomal protein uL13 family. Part of the 50S ribosomal subunit.

In terms of biological role, this protein is one of the early assembly proteins of the 50S ribosomal subunit, although it is not seen to bind rRNA by itself. It is important during the early stages of 50S assembly. In Lachnospira eligens (strain ATCC 27750 / DSM 3376 / VPI C15-48 / C15-B4) (Eubacterium eligens), this protein is Large ribosomal subunit protein uL13.